The chain runs to 220 residues: Thiopurine S-methyltransferase (220 aa).

The S-adenosyl-L-methionine site is built by tryptophan 14, leucine 49, glutamate 70, and arginine 127.

It belongs to the class I-like SAM-binding methyltransferase superfamily. TPMT family.

Its subcellular location is the cytoplasm. It carries out the reaction S-adenosyl-L-methionine + a thiopurine = S-adenosyl-L-homocysteine + a thiopurine S-methylether.. This chain is Thiopurine S-methyltransferase, found in Gluconobacter oxydans (strain 621H) (Gluconobacter suboxydans).